Reading from the N-terminus, the 92-residue chain is Small ribosomal subunit protein uS19c (92 aa).

Belongs to the universal ribosomal protein uS19 family.

It is found in the plastid. Its function is as follows. Protein S19 forms a complex with S13 that binds strongly to the 16S ribosomal RNA. This chain is Small ribosomal subunit protein uS19c, found in Aneura mirabilis (Parasitic liverwort).